The primary structure comprises 108 residues: Large ribosomal subunit protein uL23 (108 aa).

The protein belongs to the universal ribosomal protein uL23 family. Part of the 50S ribosomal subunit. Contacts protein L29, and trigger factor when it is bound to the ribosome.

Its function is as follows. One of the early assembly proteins it binds 23S rRNA. One of the proteins that surrounds the polypeptide exit tunnel on the outside of the ribosome. Forms the main docking site for trigger factor binding to the ribosome. The chain is Large ribosomal subunit protein uL23 from Leptothrix cholodnii (strain ATCC 51168 / LMG 8142 / SP-6) (Leptothrix discophora (strain SP-6)).